Reading from the N-terminus, the 284-residue chain is NH(3)-dependent NAD(+) synthetase (284 aa).

Residue Gly51 to Ser58 participates in ATP binding. A Mg(2+)-binding site is contributed by Asp57. Arg148 is a deamido-NAD(+) binding site. Position 168 (Thr168) interacts with ATP. Residue Glu173 participates in Mg(2+) binding. Lys181 and Asp188 together coordinate deamido-NAD(+). ATP is bound by residues Lys197 and Thr219. Residue His268–Lys269 coordinates deamido-NAD(+).

The protein belongs to the NAD synthetase family. As to quaternary structure, homodimer.

The catalysed reaction is deamido-NAD(+) + NH4(+) + ATP = AMP + diphosphate + NAD(+) + H(+). Its pathway is cofactor biosynthesis; NAD(+) biosynthesis; NAD(+) from deamido-NAD(+) (ammonia route): step 1/1. Its function is as follows. Catalyzes the ATP-dependent amidation of deamido-NAD to form NAD. Uses ammonia as a nitrogen source. The polypeptide is NH(3)-dependent NAD(+) synthetase (Burkholderia mallei (strain NCTC 10247)).